Consider the following 142-residue polypeptide: C-type lectin 13 (142 aa).

The first 23 residues, 1–23, serve as a signal peptide directing secretion; sequence MGRLVFVSFGGWDVFLSLSGTGA. 3 disulfides stabilise this stretch: cysteine 25/cysteine 36, cysteine 53/cysteine 138, and cysteine 115/cysteine 130. In terms of domain architecture, C-type lectin spans 32 to 139; the sequence is YEGHCYRVFQ…CSKTHNVVCK (108 aa).

It belongs to the snaclec family. In terms of assembly, heteromultimer; disulfide-linked. Expressed by the venom gland.

It localises to the secreted. In terms of biological role, interferes with one step of hemostasis (modulation of platelet aggregation, or coagulation cascade, for example). This is C-type lectin 13 from Crotalus adamanteus (Eastern diamondback rattlesnake).